We begin with the raw amino-acid sequence, 692 residues long: Peroxisomal primary amine oxidase (692 aa).

Over residues 1–22 the composition is skewed to low complexity; sequence MERLRQIASQATAASAAPARPA. The segment at 1-26 is disordered; it reads MERLRQIASQATAASAAPARPAHPLD. Asn-243 is a glycosylation site (N-linked (GlcNAc...) asparagine). 317–328 contributes to the substrate binding site; sequence ALDIGEYGAGYM. The active-site Proton acceptor is the Asp-319. A disulfide bond links Cys-338 and Cys-364. 402-407 serves as a coordination point for substrate; it reads AANYEY. Tyr-405 functions as the Schiff-base intermediate with substrate; via topaquinone in the catalytic mechanism. A 2',4',5'-topaquinone modification is found at Tyr-405. Cu cation is bound by residues His-456 and His-458. The Mn(2+) site is built by Asp-465, Asp-613, and Ile-614. His-624 is a binding site for Cu cation.

This sequence belongs to the copper/topaquinone oxidase family. Homodimer. Cu cation is required as a cofactor. The cofactor is Zn(2+). Requires L-topaquinone as cofactor. Mn(2+) serves as cofactor. Topaquinone (TPQ) is generated by copper-dependent autoxidation of a specific tyrosyl residue.

The protein localises to the peroxisome. The catalysed reaction is a primary methyl amine + O2 + H2O = an aldehyde + H2O2 + NH4(+). The chain is Peroxisomal primary amine oxidase (AMO) from Pichia angusta (Yeast).